A 444-amino-acid chain; its full sequence is Tubulin beta chain (444 aa).

GTP is bound by residues Gln-11, Glu-69, Ser-138, Gly-142, Thr-143, Gly-144, Asn-204, and Asn-226. Glu-69 provides a ligand contact to Mg(2+).

Belongs to the tubulin family. Dimer of alpha and beta chains. A typical microtubule is a hollow water-filled tube with an outer diameter of 25 nm and an inner diameter of 15 nM. Alpha-beta heterodimers associate head-to-tail to form protofilaments running lengthwise along the microtubule wall with the beta-tubulin subunit facing the microtubule plus end conferring a structural polarity. Microtubules usually have 13 protofilaments but different protofilament numbers can be found in some organisms and specialized cells. Mg(2+) is required as a cofactor.

The protein resides in the cytoplasm. It is found in the cytoskeleton. Its function is as follows. Tubulin is the major constituent of microtubules, a cylinder consisting of laterally associated linear protofilaments composed of alpha- and beta-tubulin heterodimers. Microtubules grow by the addition of GTP-tubulin dimers to the microtubule end, where a stabilizing cap forms. Below the cap, tubulin dimers are in GDP-bound state, owing to GTPase activity of alpha-tubulin. In Euplotoides octocarinatus (Freshwater ciliate), this protein is Tubulin beta chain.